Consider the following 79-residue polypeptide: Dermaseptin-S8 (79 aa).

The first 22 residues, 1-22 (MDILKKSLFLVLFLGLVSLSIC), serve as a signal peptide directing secretion. A propeptide spanning residues 23 to 45 (EEEKRENEDEEKQEDDEQSEMKR) is cleaved from the precursor. The residue at position 76 (glutamine 76) is a Glutamine amide. Residues 78–79 (AQ) constitute a propeptide that is removed on maturation.

This sequence belongs to the frog skin active peptide (FSAP) family. Dermaseptin subfamily. Expressed by the skin glands.

The protein localises to the secreted. Potent antimicrobial peptide with activity against bacteria, fungi and protozoa. Probably acts by disturbing membrane functions with its amphipathic structure. This is Dermaseptin-S8 from Phyllomedusa sauvagei (Sauvage's leaf frog).